Consider the following 430-residue polypeptide: Putrescine 2-hydroxylase (430 aa).

One can recognise a Rieske domain in the interval 88 to 203; it reads LYVGHQKLVP…LRDCHGLLFE (116 aa). Residues cysteine 128, histidine 130, cysteine 162, and histidine 165 each contribute to the [2Fe-2S] cluster site.

It belongs to the bacterial ring-hydroxylating dioxygenase alpha subunit family. It depends on [2Fe-2S] cluster as a cofactor.

In terms of biological role, rieske-type iron sulfur protein that can catalyze in vitro the 2-hydroxylation of putrescine, forming 2-hydroxyputrescine. May be involved in the biosynthesis of the cyclic hydroxamate siderophore alcaligin. This Bordetella bronchiseptica (strain ATCC BAA-588 / NCTC 13252 / RB50) (Alcaligenes bronchisepticus) protein is Putrescine 2-hydroxylase.